Reading from the N-terminus, the 462-residue chain is Cytochrome P450 20A1 (462 aa).

Residues 4–24 traverse the membrane as a helical segment; sequence FAIFAVTFLLALVGAVLYLYP. Position 409 (Cys-409) interacts with heme.

Belongs to the cytochrome P450 family. Requires heme as cofactor.

Its subcellular location is the membrane. The protein is Cytochrome P450 20A1 (Cyp20a1) of Rattus norvegicus (Rat).